A 634-amino-acid chain; its full sequence is Chaperone protein DnaK (634 aa).

T198 carries the phosphothreonine; by autocatalysis modification. The disordered stretch occupies residues 599-634 (KQTQEGAEAASEAGEQSAGDEGVVDAEFEEVDEQNK). Positions 602-619 (QEGAEAASEAGEQSAGDE) are enriched in low complexity. The span at 620–634 (GVVDAEFEEVDEQNK) shows a compositional bias: acidic residues.

Belongs to the heat shock protein 70 family.

Its function is as follows. Acts as a chaperone. In Syntrophotalea carbinolica (strain DSM 2380 / NBRC 103641 / GraBd1) (Pelobacter carbinolicus), this protein is Chaperone protein DnaK.